An 843-amino-acid polypeptide reads, in one-letter code: Taste receptor type 1 member 2 (843 aa).

The N-terminal stretch at 1 to 19 is a signal peptide; it reads MGPQARTLHLLFLLLHALP. The Extracellular portion of the chain corresponds to 20–570; sequence KPVMLVGNSD…AFLEWHEVPT (551 aa). N-linked (GlcNAc...) asparagine glycosylation is found at asparagine 87, asparagine 296, asparagine 316, asparagine 355, asparagine 372, asparagine 432, asparagine 484, asparagine 491, and asparagine 531. Residues 571-591 form a helical membrane-spanning segment; it reads IVVTILAALGFISTLAILLIF. At 592-606 the chain is on the cytoplasmic side; that stretch reads WRHFQTPMVRSAGGP. A helical transmembrane segment spans residues 607 to 627; it reads MCFLMLVPLLLAFGMVPVYVG. Residues 628 to 642 are Extracellular-facing; sequence PPTVFSCFCRQAFFT. Residues 643–663 traverse the membrane as a helical segment; it reads VCFSVCLSCITVRSFQIVCVF. The Cytoplasmic portion of the chain corresponds to 664-682; that stretch reads KMARRLPSAYGFWMRYHGP. Residues 683–703 form a helical membrane-spanning segment; sequence YVFVAFITAVKVALVAGNMLA. Over 704–731 the chain is Extracellular; it reads TTINPIGRTDPDDPNIIILSCHPNYRNG. A helical transmembrane segment spans residues 732-752; the sequence is LLFNTSMDLLLSVLGFSFAYV. Residues 753–764 lie on the Cytoplasmic side of the membrane; it reads GKELPTNYNEAK. The chain crosses the membrane as a helical span at residues 765-785; that stretch reads FITLSMTFSFTSSISLCTFMS. Residues 786-789 lie on the Extracellular side of the membrane; the sequence is VHDG. The helical transmembrane segment at 790–810 threads the bilayer; it reads VLVTIMDLLVTVLNFLAIGLG. Topologically, residues 811-843 are cytoplasmic; sequence YFGPKCYMILFYPERNTSAYFNSMIQGYTMRKS.

The protein belongs to the G-protein coupled receptor 3 family. TAS1R subfamily. Forms heterodimers with TAS1R3. Expressed mainly in circumvallate and foliate taste papillae.

The protein localises to the cell membrane. Putative taste receptor. TAS1R2/TAS1R3 recognizes diverse natural and synthetic sweeteners. This is Taste receptor type 1 member 2 (Tas1r2) from Mus musculus (Mouse).